The following is a 183-amino-acid chain: Capsid protein (183 aa).

Residues Arg-150–Cys-183 are disordered. Positions Gln-151–Ser-176 are enriched in basic residues. Positions Arg-158–Arg-175 match the Bipartite nuclear localization signal motif. 2 positions are modified to phosphoserine; by host: Ser-162 and Ser-170. A run of 2 repeats spans residues Ser-162–Gln-169 and Ser-170–Gln-177. Positions Ser-162–Gln-177 are 2 X 8 AA repeats of S-P-R-R-R-[PR]-S-Q. An RNA binding region spans residues Gln-177–Cys-183.

This sequence belongs to the orthohepadnavirus core antigen family. As to quaternary structure, homodimerizes, then multimerizes. Interacts with cytosol exposed regions of viral L glycoprotein present in the reticulum-to-Golgi compartment. Interacts with human FLNB. Phosphorylated form interacts with host importin alpha; this interaction depends on the exposure of the NLS, which itself depends upon genome maturation and/or phosphorylation of the capsid protein. Interacts with host NUP153. Post-translationally, phosphorylated by host SRPK1, SRPK2, and maybe protein kinase C or GAPDH. Phosphorylation is critical for pregenomic RNA packaging. Protein kinase C phosphorylation is stimulated by HBx protein and may play a role in transport of the viral genome to the nucleus at the late step during the viral replication cycle.

It is found in the virion. The protein localises to the host cytoplasm. Its function is as follows. Self assembles to form an icosahedral capsid. Most capsids appear to be large particles with an icosahedral symmetry of T=4 and consist of 240 copies of capsid protein, though a fraction forms smaller T=3 particles consisting of 180 capsid proteins. Entering capsids are transported along microtubules to the nucleus. Phosphorylation of the capsid is thought to induce exposure of nuclear localization signal in the C-terminal portion of the capsid protein that allows binding to the nuclear pore complex via the importin (karyopherin-) alpha and beta. Capsids are imported in intact form through the nuclear pore into the nuclear basket, where it probably binds NUP153. Only capsids that contain the mature viral genome can release the viral DNA and capsid protein into the nucleoplasm. Immature capsids get stuck in the basket. Capsids encapsulate the pre-genomic RNA and the P protein. Pre-genomic RNA is reverse-transcribed into DNA while the capsid is still in the cytoplasm. The capsid can then either be directed to the nucleus, providing more genomes for transcription, or bud through the endoplasmic reticulum to provide new virions. This is Capsid protein from Homo sapiens (Human).